Reading from the N-terminus, the 279-residue chain is Movement protein (279 aa).

Residues 256–266 (PPIAIGSPSAS) are compositionally biased toward low complexity. Residues 256–279 (PPIAIGSPSASRNNSFRSQVVNGL) form a disordered region. The span at 267 to 279 (RNNSFRSQVVNGL) shows a compositional bias: polar residues.

This sequence belongs to the cucumovirus movement protein family.

It is found in the host cell junction. Its subcellular location is the host plasmodesma. In terms of biological role, transports viral genome to neighboring plant cells directly through plasmosdesmata, without any budding. The movement protein allows efficient cell to cell propagation, by bypassing the host cell wall barrier. Acts by forming a tubular structure at the host plasmodesmata, enlarging it enough to allow free passage of virion capsids. In Cucumis sativus (Cucumber), this protein is Movement protein.